The chain runs to 423 residues: Tyrosine--tRNA ligase (423 aa).

An L-tyrosine-binding site is contributed by Y35. The 'HIGH' region signature appears at 40–49 (PTAASLHVGH). L-tyrosine contacts are provided by Y170 and Q174. Positions 231–235 (KFGKS) match the 'KMSKS' region motif. K234 contributes to the ATP binding site. Residues 353–419 (GPLVDLLVEV…GKKNLAAVEV (67 aa)) enclose the S4 RNA-binding domain.

This sequence belongs to the class-I aminoacyl-tRNA synthetase family. TyrS type 1 subfamily. In terms of assembly, homodimer.

It localises to the cytoplasm. It carries out the reaction tRNA(Tyr) + L-tyrosine + ATP = L-tyrosyl-tRNA(Tyr) + AMP + diphosphate + H(+). Functionally, catalyzes the attachment of tyrosine to tRNA(Tyr) in a two-step reaction: tyrosine is first activated by ATP to form Tyr-AMP and then transferred to the acceptor end of tRNA(Tyr). This Streptomyces griseus subsp. griseus (strain JCM 4626 / CBS 651.72 / NBRC 13350 / KCC S-0626 / ISP 5235) protein is Tyrosine--tRNA ligase.